The primary structure comprises 151 residues: Putative pre-16S rRNA nuclease (151 aa).

This sequence belongs to the YqgF nuclease family.

Its subcellular location is the cytoplasm. Could be a nuclease involved in processing of the 5'-end of pre-16S rRNA. The protein is Putative pre-16S rRNA nuclease of Neisseria meningitidis serogroup C (strain 053442).